Consider the following 347-residue polypeptide: UPF0284 protein YN1551_0030 (347 aa).

The protein belongs to the UPF0284 family.

The protein is UPF0284 protein YN1551_0030 of Saccharolobus islandicus (strain Y.N.15.51 / Yellowstone #2) (Sulfolobus islandicus).